The following is a 275-amino-acid chain: 4-hydroxy-3-methylbut-2-enyl diphosphate reductase (275 aa).

Residue C12 participates in [4Fe-4S] cluster binding. (2E)-4-hydroxy-3-methylbut-2-enyl diphosphate-binding residues include H36 and H70. Residues H36 and H70 each coordinate dimethylallyl diphosphate. The isopentenyl diphosphate site is built by H36 and H70. Residue C92 coordinates [4Fe-4S] cluster. (2E)-4-hydroxy-3-methylbut-2-enyl diphosphate is bound at residue H120. Residue H120 coordinates dimethylallyl diphosphate. H120 serves as a coordination point for isopentenyl diphosphate. The Proton donor role is filled by E122. T158 lines the (2E)-4-hydroxy-3-methylbut-2-enyl diphosphate pocket. Position 186 (C186) interacts with [4Fe-4S] cluster. Positions 214, 215, 216, and 258 each coordinate (2E)-4-hydroxy-3-methylbut-2-enyl diphosphate. The dimethylallyl diphosphate site is built by S214, S215, N216, and S258. Residues S214, S215, N216, and S258 each coordinate isopentenyl diphosphate.

The protein belongs to the IspH family. The cofactor is [4Fe-4S] cluster.

It carries out the reaction isopentenyl diphosphate + 2 oxidized [2Fe-2S]-[ferredoxin] + H2O = (2E)-4-hydroxy-3-methylbut-2-enyl diphosphate + 2 reduced [2Fe-2S]-[ferredoxin] + 2 H(+). The enzyme catalyses dimethylallyl diphosphate + 2 oxidized [2Fe-2S]-[ferredoxin] + H2O = (2E)-4-hydroxy-3-methylbut-2-enyl diphosphate + 2 reduced [2Fe-2S]-[ferredoxin] + 2 H(+). It participates in isoprenoid biosynthesis; dimethylallyl diphosphate biosynthesis; dimethylallyl diphosphate from (2E)-4-hydroxy-3-methylbutenyl diphosphate: step 1/1. It functions in the pathway isoprenoid biosynthesis; isopentenyl diphosphate biosynthesis via DXP pathway; isopentenyl diphosphate from 1-deoxy-D-xylulose 5-phosphate: step 6/6. Catalyzes the conversion of 1-hydroxy-2-methyl-2-(E)-butenyl 4-diphosphate (HMBPP) into a mixture of isopentenyl diphosphate (IPP) and dimethylallyl diphosphate (DMAPP). Acts in the terminal step of the DOXP/MEP pathway for isoprenoid precursor biosynthesis. This Campylobacter hominis (strain ATCC BAA-381 / DSM 21671 / CCUG 45161 / LMG 19568 / NCTC 13146 / CH001A) protein is 4-hydroxy-3-methylbut-2-enyl diphosphate reductase.